Reading from the N-terminus, the 127-residue chain is Large ribosomal subunit protein bL17 (127 aa).

It belongs to the bacterial ribosomal protein bL17 family. As to quaternary structure, part of the 50S ribosomal subunit. Contacts protein L32.

The protein is Large ribosomal subunit protein bL17 of Lactiplantibacillus plantarum (strain ATCC BAA-793 / NCIMB 8826 / WCFS1) (Lactobacillus plantarum).